Reading from the N-terminus, the 503-residue chain is MFGDRQRPMVLVLGLGESGLAIARWCARHGCRLRIADTREAPPNLAALQAEGIDAEFVGGAFTPALLDGGIEIVGLSPGLSPLEPALAALVAAANERGVAVWGELEFFAQALRALGTSGYQPKVLAITGTNGKTTTTSLTGLLCQRSGKKVAVAGNISPAMLDRLASAIDETALPDVWVLELSSFQLETARTFAPDAAAILNITQDHLDWHGSFDAYAQAKGLIFGATTTRVLNRDDAAVMKFAPAAGAADAPRTVTFGLNEPTQDGDYGLSRDNGIAWLVEAVDRDAPDEATTTRRRKRDAAHTPDIAQKRLMPADALRIRGLHNAANALAAFALARAIDLPAAPLLHALREYRGEAHRVEVIATIDDVDYVDDSKGTNVGATVAALDGLAQKIVLIAGGDGKGQDFGPLVAPVARWCRAVMLIGRDAPVIRDTLAETGVPLAGHATLEAAVHAAAELAEPGDAVLLSPACASLDMFRNYAHRAEVFRAAVDAIAIDKGATP.

129 to 135 (GTNGKTT) contributes to the ATP binding site.

Belongs to the MurCDEF family.

The protein resides in the cytoplasm. The catalysed reaction is UDP-N-acetyl-alpha-D-muramoyl-L-alanine + D-glutamate + ATP = UDP-N-acetyl-alpha-D-muramoyl-L-alanyl-D-glutamate + ADP + phosphate + H(+). The protein operates within cell wall biogenesis; peptidoglycan biosynthesis. In terms of biological role, cell wall formation. Catalyzes the addition of glutamate to the nucleotide precursor UDP-N-acetylmuramoyl-L-alanine (UMA). This Burkholderia orbicola (strain MC0-3) protein is UDP-N-acetylmuramoylalanine--D-glutamate ligase.